The primary structure comprises 528 residues: Na(+)/H(+) antiporter NhaB (528 aa).

10 helical membrane-spanning segments follow: residues 20–39 (WFKIAIISFLVINPIVFYFN), 66–86 (PGGLLAIEAVAIGMTSPSQVL), 97–117 (LLLVFMVAGIYFMKQLLLFVF), 139–159 (AFLSAFLDALTVIAVIITVAV), 241–261 (IRMSPVTVPVFFAGITTCFLV), 304–324 (AVIGVWLIAGLALHLASVGLI), 349–369 (EEALPFTALLAVFFAIVAVII), 390–410 (LVIFYIANGLLSMVSDNVFVG), 448–468 (ATPNGQAAFLFLLTSAIAPLI), and 476–496 (VWMALPYTIVLSIVGVLAIQL).

It belongs to the NhaB Na(+)/H(+) (TC 2.A.34) antiporter family.

The protein localises to the cell inner membrane. It catalyses the reaction 2 Na(+)(in) + 3 H(+)(out) = 2 Na(+)(out) + 3 H(+)(in). In terms of biological role, na(+)/H(+) antiporter that extrudes sodium in exchange for external protons. This Shewanella pealeana (strain ATCC 700345 / ANG-SQ1) protein is Na(+)/H(+) antiporter NhaB.